Reading from the N-terminus, the 260-residue chain is Small ribosomal subunit protein eS4 (260 aa).

The region spanning 46–111 (VPLLILVRDM…RYRVVMNEHH (66 aa)) is the S4 RNA-binding domain.

It belongs to the eukaryotic ribosomal protein eS4 family.

This chain is Small ribosomal subunit protein eS4, found in Methanopyrus kandleri (strain AV19 / DSM 6324 / JCM 9639 / NBRC 100938).